We begin with the raw amino-acid sequence, 264 residues long: Somatomedin-B and thrombospondin type-1 domain-containing protein (264 aa).

The first 20 residues, 1–20, serve as a signal peptide directing secretion; it reads MRTLWMALCALSRLWPGAQA. The region spanning 24–75 is the SMB domain; sequence EAGRCCPGRDPACFARGWRLDRVYGTCFCDQACRFTGDCCFDYDRACPARPC. Intrachain disulfides connect cysteine 28/cysteine 36, cysteine 28/cysteine 52, cysteine 36/cysteine 70, cysteine 50/cysteine 52, cysteine 50/cysteine 63, cysteine 56/cysteine 62, and cysteine 63/cysteine 70. One can recognise a TSP type-1 domain in the interval 74–127; it reads PCFVGEWSPWSGCADQCKPTTRVRRRSVQQEPQNGGAPCPPLEERAGCLEYSTP. An N-linked (GlcNAc...) asparagine glycan is attached at asparagine 227.

The protein belongs to the thrombospondin family. In terms of tissue distribution, detected in aorta extracellular matrix (at protein level).

Its subcellular location is the secreted. It is found in the extracellular space. It localises to the extracellular matrix. The chain is Somatomedin-B and thrombospondin type-1 domain-containing protein (SBSPON) from Homo sapiens (Human).